Here is a 479-residue protein sequence, read N- to C-terminus: Nucleoside-diphosphatase uda-1 (479 aa).

The Cytoplasmic portion of the chain corresponds to 1–7 (MLFPAFS). Residues 8–24 (ILLISFFSLLSVVTTKT) traverse the membrane as a helical; Signal-anchor for type II membrane protein segment. Residues 25-479 (QYWCHGDGVL…VLSYFNIISV (455 aa)) lie on the Lumenal side of the membrane. Glu-171 (proton acceptor) is an active-site residue. 2 N-linked (GlcNAc...) asparagine glycosylation sites follow: Asn-300 and Asn-452.

It belongs to the GDA1/CD39 NTPase family. Ca(2+) serves as cofactor. It depends on Mg(2+) as a cofactor. Requires Mn(2+) as cofactor.

The protein localises to the endomembrane system. It carries out the reaction a ribonucleoside 5'-diphosphate + H2O = a ribonucleoside 5'-phosphate + phosphate + H(+). In terms of biological role, hydrolyzes UDP and GDP but not any other nucleoside di-, mono- or triphosphates. May promote reglycosylation reactions involved in glycoproteins folding and quality control in the endoplasmic reticulum. The chain is Nucleoside-diphosphatase uda-1 (uda-1) from Caenorhabditis elegans.